The primary structure comprises 257 residues: Phosphonates import ATP-binding protein PhnC (257 aa).

Positions 2-246 (IEFRNVSKVY…KFAEIYGDVA (245 aa)) constitute an ABC transporter domain. 35–42 (GLSGAGKS) provides a ligand contact to ATP.

The protein belongs to the ABC transporter superfamily. Phosphonates importer (TC 3.A.1.9.1) family. The complex is composed of two ATP-binding proteins (PhnC), two transmembrane proteins (PhnE) and a solute-binding protein (PhnD).

It is found in the cell membrane. It carries out the reaction phosphonate(out) + ATP + H2O = phosphonate(in) + ADP + phosphate + H(+). Part of the ABC transporter complex PhnCDE involved in phosphonates import. Responsible for energy coupling to the transport system. This is Phosphonates import ATP-binding protein PhnC from Bacillus thuringiensis subsp. konkukian (strain 97-27).